A 387-amino-acid chain; its full sequence is 1,3-propanediol dehydrogenase (387 aa).

It belongs to the iron-containing alcohol dehydrogenase family. In terms of assembly, homooctamer. It depends on Fe cation as a cofactor.

It carries out the reaction propane-1,3-diol + NAD(+) = 3-hydroxypropanal + NADH + H(+). With respect to regulation, inhibited by the metal chelator 1,10-phenanthroline. Catalyzes the reduction of 3-hydroxypropanal. Is considerably less active with glyceraldehyde, propionaldehyde, acetaldehyde, and butyraldehyde. Also catalyzes the oxidation of various primary, secondary, and tertiary alcohols. Is most active with substrates containing two primary alcohol groups separated by one or two carbon atoms. 1,3-propanediol is the preferred substrate. This chain is 1,3-propanediol dehydrogenase, found in Citrobacter freundii.